A 338-amino-acid polypeptide reads, in one-letter code: Anthranilate phosphoribosyltransferase (338 aa).

5-phospho-alpha-D-ribose 1-diphosphate-binding positions include Gly-81, 84-85 (GD), Ser-89, 91-94 (NIST), 109-117 (KHGNRSVSS), and Ser-121. Gly-81 is a binding site for anthranilate. Ser-93 contributes to the Mg(2+) binding site. Asn-112 contributes to the anthranilate binding site. Arg-167 contacts anthranilate. Mg(2+)-binding residues include Asp-226 and Glu-227.

This sequence belongs to the anthranilate phosphoribosyltransferase family. In terms of assembly, homodimer. It depends on Mg(2+) as a cofactor.

It carries out the reaction N-(5-phospho-beta-D-ribosyl)anthranilate + diphosphate = 5-phospho-alpha-D-ribose 1-diphosphate + anthranilate. It participates in amino-acid biosynthesis; L-tryptophan biosynthesis; L-tryptophan from chorismate: step 2/5. Catalyzes the transfer of the phosphoribosyl group of 5-phosphorylribose-1-pyrophosphate (PRPP) to anthranilate to yield N-(5'-phosphoribosyl)-anthranilate (PRA). In Thioalkalivibrio sulfidiphilus (strain HL-EbGR7), this protein is Anthranilate phosphoribosyltransferase.